An 83-amino-acid polypeptide reads, in one-letter code: Large ribosomal subunit protein bL31B (83 aa).

It belongs to the bacterial ribosomal protein bL31 family. Type B subfamily. As to quaternary structure, part of the 50S ribosomal subunit.

This is Large ribosomal subunit protein bL31B from Lacticaseibacillus casei (strain BL23) (Lactobacillus casei).